The sequence spans 270 residues: ATP synthase subunit a (270 aa).

The next 7 membrane-spanning stretches (helical) occupy residues 29–49 (VDTF…FAMV), 87–107 (IAPL…MDLF), 108–128 (PVDL…GLEP), 140–160 (DVNA…GFSI), 182–202 (PVGA…ELAA), 220–240 (LIFI…GAPW), and 241–261 (AIFH…LTIV).

Belongs to the ATPase A chain family. As to quaternary structure, F-type ATPases have 2 components, CF(1) - the catalytic core - and CF(0) - the membrane proton channel. CF(1) has five subunits: alpha(3), beta(3), gamma(1), delta(1), epsilon(1). CF(0) has three main subunits: a(1), b(2) and c(9-12). The alpha and beta chains form an alternating ring which encloses part of the gamma chain. CF(1) is attached to CF(0) by a central stalk formed by the gamma and epsilon chains, while a peripheral stalk is formed by the delta and b chains.

It is found in the cell inner membrane. Key component of the proton channel; it plays a direct role in the translocation of protons across the membrane. The polypeptide is ATP synthase subunit a (Chromobacterium violaceum (strain ATCC 12472 / DSM 30191 / JCM 1249 / CCUG 213 / NBRC 12614 / NCIMB 9131 / NCTC 9757 / MK)).